We begin with the raw amino-acid sequence, 55 residues long: Large ribosomal subunit protein bL33 (55 aa).

This sequence belongs to the bacterial ribosomal protein bL33 family.

The sequence is that of Large ribosomal subunit protein bL33 from Aliivibrio salmonicida (strain LFI1238) (Vibrio salmonicida (strain LFI1238)).